Here is a 352-residue protein sequence, read N- to C-terminus: Phenylalanine--tRNA ligase alpha subunit (352 aa).

A Mg(2+)-binding site is contributed by glutamate 258.

It belongs to the class-II aminoacyl-tRNA synthetase family. Phe-tRNA synthetase alpha subunit type 1 subfamily. As to quaternary structure, tetramer of two alpha and two beta subunits. It depends on Mg(2+) as a cofactor.

It is found in the cytoplasm. The catalysed reaction is tRNA(Phe) + L-phenylalanine + ATP = L-phenylalanyl-tRNA(Phe) + AMP + diphosphate + H(+). This is Phenylalanine--tRNA ligase alpha subunit from Staphylococcus aureus (strain bovine RF122 / ET3-1).